The sequence spans 347 residues: GMP reductase (347 aa).

108–131 (AEFEKVKKIMALSEEFVFICIDIA) is an NADP(+) binding site. K(+)-binding residues include Gly-181 and Gly-183. Cys-186 serves as the catalytic Thioimidate intermediate. 216-239 (IIGDGGCSCAGDVSKAFGGGADFV) contacts NADP(+).

It belongs to the IMPDH/GMPR family. GuaC type 1 subfamily. In terms of assembly, homotetramer.

The enzyme catalyses IMP + NH4(+) + NADP(+) = GMP + NADPH + 2 H(+). Catalyzes the irreversible NADPH-dependent deamination of GMP to IMP. It functions in the conversion of nucleobase, nucleoside and nucleotide derivatives of G to A nucleotides, and in maintaining the intracellular balance of A and G nucleotides. This Vibrio atlanticus (strain LGP32) (Vibrio splendidus (strain Mel32)) protein is GMP reductase.